We begin with the raw amino-acid sequence, 109 residues long: Probable glutaredoxin slr1562 (109 aa).

The 99-residue stretch at 11 to 109 (LSGRQADGIK…PLLATPPNPA (99 aa)) folds into the Glutaredoxin domain. A disulfide bridge links cysteine 31 with cysteine 34.

Belongs to the glutaredoxin family.

Its function is as follows. Has a glutathione-disulfide oxidoreductase activity in the presence of NADPH and glutathione reductase. Reduces low molecular weight disulfides and proteins. The sequence is that of Probable glutaredoxin slr1562 from Synechocystis sp. (strain ATCC 27184 / PCC 6803 / Kazusa).